A 270-amino-acid chain; its full sequence is ATP synthase subunit a (270 aa).

The next 7 membrane-spanning stretches (helical) occupy residues 29 to 49 (VDTF…FAMV), 87 to 107 (IAPL…MDLF), 108 to 128 (PVDL…GLEP), 140 to 160 (DVNA…GFSI), 182 to 202 (PVGA…ELAA), 220 to 240 (LIFI…GAPW), and 241 to 261 (AIFH…LTIV).

This sequence belongs to the ATPase A chain family. F-type ATPases have 2 components, CF(1) - the catalytic core - and CF(0) - the membrane proton channel. CF(1) has five subunits: alpha(3), beta(3), gamma(1), delta(1), epsilon(1). CF(0) has three main subunits: a(1), b(2) and c(9-12). The alpha and beta chains form an alternating ring which encloses part of the gamma chain. CF(1) is attached to CF(0) by a central stalk formed by the gamma and epsilon chains, while a peripheral stalk is formed by the delta and b chains.

The protein localises to the cell inner membrane. Key component of the proton channel; it plays a direct role in the translocation of protons across the membrane. This Chromobacterium violaceum (strain ATCC 12472 / DSM 30191 / JCM 1249 / CCUG 213 / NBRC 12614 / NCIMB 9131 / NCTC 9757 / MK) protein is ATP synthase subunit a.